The primary structure comprises 386 residues: Cysteine protease Amb a 11.0101 (386 aa).

A signal peptide spans 1–22 (MEINKLVCFSFSLVLILGLVES). The T-cell epitope. MHC class II peptide able to activate CD(4+) T cells of the ragweed pollen-allergic patients indicated by significantly increased IL-2 production compared to non-allergic individuals. Not recognized by IgE of the patients allergic to ragweed pollen stretch occupies residues 6–20 (LVCFSFSLVLILGLV). The propeptide at 23–108 (FHYHERELES…SKISHFQALR (86 aa)) is activation peptide. Asn-127 carries an N-linked (GlcNAc...) (complex) asparagine glycan. Intrachain disulfides connect Cys-152–Cys-193, Cys-186–Cys-226, and Cys-283–Cys-334. Cys-155 is a catalytic residue. Residues 173–186 (GKLVKFSEQQLVDC) form a B-cell epitope. Binds to IgE of the patients allergic to ragweed pollen region. Active-site residues include His-289 and Asn-310. The interval 340–377 (SSFPIMNDPNPPKDDPNGPKDDPDAPKDPKFKTTQRLQ) is disordered. Basic and acidic residues predominate over residues 350-370 (PPKDDPNGPKDDPDAPKDPKF). Positions 371 to 386 (KTTQRLQGIRTKLLEL) are cleaved as a propeptide — removed in mature form.

This sequence belongs to the peptidase C1 family. Homodimer. In terms of processing, autocatalytic proteolytic cleavage of N-terminal activation peptide. Post-translationally, N-glycosylated. Glycosylation is not required for binding to IgE. In terms of tissue distribution, expressed in pollen (at protein and mRNA level).

Its activity is regulated as follows. Activated by L-cysteine. Inhibited by cysteine protease inhibitor E64 (L-trans-epoxysuccinyl-leucylamide-(4-guanido)-butane). Inhibited by cysteine/serine protease inhibitor leupeptin. Not inhibited by serine protease inhibitors 4-(2-aminoethyl)benzenesulfonyl fluoride hydrochloride (AEBSF) and phenylmethanesulfonyl fluoride (PMSF), metallo protease inhibitor bestatin or aspartic protease inhibitor pepstatin A. Functionally, cysteine protease. Hydrolyzes casein and synthetic peptide Boc-Val-Leu-Lys-7-amino-4-methylcoumarin (Boc-VLK-AMC) in vitro. The protein is Cysteine protease Amb a 11.0101 of Ambrosia artemisiifolia (Common ragweed).